Here is a 400-residue protein sequence, read N- to C-terminus: Snake venom metalloproteinase H2 (400 aa).

The N-terminal stretch at 1–6 is a signal peptide; the sequence is FPYQGS. Residues 7-176 constitute a propeptide that is removed on maturation; sequence STILESGNVN…KKASQLIVST (170 aa). The region spanning 180 to 377 is the Peptidase M12B domain; the sequence is RYMEIVIVVD…ENPPCILNKP (198 aa). Positions 183 and 267 each coordinate Ca(2+). Cystine bridges form between Cys291–Cys372, Cys331–Cys356, and Cys333–Cys339. His316 is a binding site for Zn(2+). Glu317 is an active-site residue. Zn(2+) contacts are provided by His320 and His326. Residues Cys372, Asn375, Val387, Asn390, Leu392, Glu394, and Asp400 each contribute to the Ca(2+) site. Positions 378-400 are excised as a propeptide; that stretch reads LRTDTVSTPVSGNELLEAGKDYD.

The protein belongs to the venom metalloproteinase (M12B) family. P-I subfamily. In terms of assembly, monomer. Requires Zn(2+) as cofactor. As to expression, expressed by the venom gland.

The protein resides in the secreted. In terms of biological role, snake venom metalloproteinase that impairs hemostasis in the envenomed animal. The protein is Snake venom metalloproteinase H2 of Deinagkistrodon acutus (Hundred-pace snake).